The primary structure comprises 297 residues: 4-hydroxy-tetrahydrodipicolinate synthase (297 aa).

A pyruvate-binding site is contributed by threonine 45. Tyrosine 133 (proton donor/acceptor) is an active-site residue. The Schiff-base intermediate with substrate role is filled by lysine 161. Isoleucine 205 is a pyruvate binding site.

The protein belongs to the DapA family. Homotetramer; dimer of dimers.

Its subcellular location is the cytoplasm. The catalysed reaction is L-aspartate 4-semialdehyde + pyruvate = (2S,4S)-4-hydroxy-2,3,4,5-tetrahydrodipicolinate + H2O + H(+). Its pathway is amino-acid biosynthesis; L-lysine biosynthesis via DAP pathway; (S)-tetrahydrodipicolinate from L-aspartate: step 3/4. Catalyzes the condensation of (S)-aspartate-beta-semialdehyde [(S)-ASA] and pyruvate to 4-hydroxy-tetrahydrodipicolinate (HTPA). This is 4-hydroxy-tetrahydrodipicolinate synthase from Dichelobacter nodosus (strain VCS1703A).